The following is a 358-amino-acid chain: Zinc-type alcohol dehydrogenase-like protein YogA (358 aa).

Belongs to the zinc-containing alcohol dehydrogenase family. Quinone oxidoreductase subfamily.

It participates in secondary metabolite biosynthesis. Functionally, zinc-type alcohol dehydrogenase-like protein; part of the gene cluster that mediates the biosynthesis of phomenoic acid, a long chain aliphatic carboxylic acid that does not appear to be essential for pathogenicity but may play a role in allowing to outcompete other fungi in the environmental niche via its antifungal properties. The polyketide synthase produces the long methylated aliphatic carboxylic acid chain of phomenoic acid. The cluster-specific cytochrome P450 monooxygenase may then hydroxylate the methyl group of carbon 31. The putative dehydrogenase YogA, which has no obvious role in phomenoic acid biosynthesis, may further modify phomenoic acid to produce a compound not identified yet. In Leptosphaeria maculans (strain JN3 / isolate v23.1.3 / race Av1-4-5-6-7-8) (Blackleg fungus), this protein is Zinc-type alcohol dehydrogenase-like protein YogA.